The sequence spans 219 residues: ADP-sugar pyrophosphatase (219 aa).

N-acetylmethionine is present on Met1. 2 positions are modified to phosphoserine: Ser3 and Ser10. Residue Trp28 participates in substrate binding. Residue Lys42 forms a Glycyl lysine isopeptide (Lys-Gly) (interchain with G-Cter in SUMO2) linkage. Thr45 carries the post-translational modification Phosphothreonine. Substrate contacts are provided by residues Trp46 to Glu47 and Arg51. Positions Gln57–Val197 constitute a Nudix hydrolase domain. At Tyr74 the chain carries Phosphotyrosine. Residue Arg84 participates in substrate binding. Residue Ala96 participates in Mg(2+) binding. Positions Gly97–Gly118 match the Nudix box motif. Position 98 (Leu98) interacts with substrate. Mg(2+) is bound by residues Glu112 and Glu116. Asp133 is a substrate binding site. A Mg(2+)-binding site is contributed by Glu166. Residues Lys210 and Lys218 each carry the N6-acetyllysine modification.

Belongs to the Nudix hydrolase family. In terms of assembly, homodimer. Interacts with PARG. Requires Mg(2+) as cofactor. In terms of processing, phosphorylation at Thr-45 is required for homodimer stability; dephosphorylation results in destabilization of the homodimer. Dephosphorylation at Thr-45 promotes the ATP-synthesis activity. In terms of tissue distribution, widely expressed. Most abundant in liver.

The protein resides in the nucleus. The catalysed reaction is D-ribose 5-phosphate + ATP + H(+) = ADP-D-ribose + diphosphate. It carries out the reaction ADP-D-ribose + H2O = D-ribose 5-phosphate + AMP + 2 H(+). The enzyme catalyses 8-oxo-dGDP + H2O = 8-oxo-dGMP + phosphate + H(+). Functionally, enzyme that can either act as an ADP-sugar pyrophosphatase in absence of diphosphate or catalyze the synthesis of ATP in presence of diphosphate. In absence of diphosphate, hydrolyzes with similar activities various modified nucleoside diphosphates such as ADP-ribose, ADP-mannose, ADP-glucose, 8-oxo-GDP and 8-oxo-dGDP. Can also hydrolyze other nucleotide sugars with low activity. In presence of diphosphate, mediates the synthesis of ATP in the nucleus by catalyzing the conversion of ADP-ribose to ATP and ribose 5-phosphate. Nuclear ATP synthesis takes place when dephosphorylated at Thr-45. Nuclear ATP generation is required for extensive chromatin remodeling events that are energy-consuming. Does not play a role in U8 snoRNA decapping activity. Binds U8 snoRNA. The protein is ADP-sugar pyrophosphatase (NUDT5) of Homo sapiens (Human).